Consider the following 125-residue polypeptide: Large ribosomal subunit protein bL12 (125 aa).

The protein belongs to the bacterial ribosomal protein bL12 family. As to quaternary structure, homodimer. Part of the ribosomal stalk of the 50S ribosomal subunit. Forms a multimeric L10(L12)X complex, where L10 forms an elongated spine to which 2 to 4 L12 dimers bind in a sequential fashion. Binds GTP-bound translation factors.

Functionally, forms part of the ribosomal stalk which helps the ribosome interact with GTP-bound translation factors. Is thus essential for accurate translation. The protein is Large ribosomal subunit protein bL12 of Dictyoglomus thermophilum (strain ATCC 35947 / DSM 3960 / H-6-12).